The chain runs to 122 residues: Large ribosomal subunit protein eL31 (122 aa).

It belongs to the eukaryotic ribosomal protein eL31 family.

The sequence is that of Large ribosomal subunit protein eL31 from Caenorhabditis elegans.